We begin with the raw amino-acid sequence, 253 residues long: Light-harvesting complex stress-related protein 1, chloroplastic (253 aa).

The transit peptide at 1–39 (MAMMMRKAAAVPASSRRSVAVNSVSGKRTVSGKAGAPVP) directs the protein to the chloroplast. A chlorophyll b-binding site is contributed by tyrosine 45. Positions 60, 81, and 84 each coordinate chlorophyll a. Position 86 (arginine 86) interacts with chlorophyll b. Residues 87 to 107 (VAMLAALGFIVGEQLQDFPLF) form a helical membrane-spanning segment. Chlorophyll a is bound at residue glutamine 124. The helical transmembrane segment at 131–151 (EPLLIAIGVAESYRVAVGWAT) threads the bilayer. Chlorophyll b-binding residues include glutamate 141 and arginine 144. Lysine 190, glutamate 191, asparagine 194, arginine 196, and glutamine 208 together coordinate chlorophyll a. The chain crosses the membrane as a helical span at residues 197–217 (LAMIAIAAFVAQELVEQTEIF).

The protein belongs to the light-harvesting chlorophyll a/b-binding (LHC) protein family.

The protein localises to the plastid. It is found in the chloroplast thylakoid membrane. Functionally, required for non-photochemical quenching (NPQ), a mechanism that converts and dissipates the harmful excess absorbed light energy into heat and protect the photosynthetic apparatus from photo-oxidative damage. Is able to sense luminal acidification of the thylakoid membranes, which occurs along with elevated electron flow caused by excess light, and to induce a large, fast, and reversible pH-dependent quenching in LHCII-containing membranes. Mediates excitation energy transfer from light-harvesting complex II (LHCII) to photosystem I (PSI), rather than photosystem II (PSII), at low pH, which mimics the acidified lumen of the thylakoid membranes in high light-exposed chloroplasts. Activates PSI-dependent fluorescence quenching in addition to dissipating excitation energy in LHCII to avoid photooxidative stress under excess light. The protein is Light-harvesting complex stress-related protein 1, chloroplastic of Chlamydomonas reinhardtii (Chlamydomonas smithii).